Here is a 320-residue protein sequence, read N- to C-terminus: Large ribosomal subunit protein uL10y (320 aa).

Residues 289–320 (AGGGAPAAAKVEEKEESDEEDYGGDFGLFDEE) form a disordered region. The segment covering 302–320 (KEESDEEDYGGDFGLFDEE) has biased composition (acidic residues). A Phosphoserine modification is found at serine 305. Tyrosine 310 bears the Phosphotyrosine mark.

Belongs to the universal ribosomal protein uL10 family. P0 forms a pentameric complex by interaction with dimers of P1 and P2.

Functionally, ribosomal protein P0 is the functional equivalent of E.coli protein L10. The sequence is that of Large ribosomal subunit protein uL10y (RPP0B) from Arabidopsis thaliana (Mouse-ear cress).